The chain runs to 117 residues: uncharacterized protein (117 aa).

This is an uncharacterized protein from Escherichia coli O157:H7.